The sequence spans 797 residues: G-type lectin S-receptor-like serine/threonine-protein kinase SD2-2 (797 aa).

The N-terminal stretch at 1 to 23 (MPCTTYLPLLLLLFLLPPPSVQS) is a signal peptide. Residues 24-139 (KVIIKGNQTI…DGSPVWQSFD (116 aa)) form the Bulb-type lectin domain. Residues 24-401 (KVIIKGNQTI…KNSKGNISKS (378 aa)) lie on the Extracellular side of the membrane. N-linked (GlcNAc...) asparagine glycans are attached at residues N30, N49, N150, and N197. The EGF-like; atypical domain occupies 274 to 310 (PEDPCRVYNLCGQLGFCSSELLKPCACIRGFRPRNDA). Disulfide bonds link C278-C290, C284-C298, C359-C381, and C363-C369. A PAN domain is found at 321–407 (CRRENGDSGE…ISKSIIILCS (87 aa)). N366 and N397 each carry an N-linked (GlcNAc...) asparagine glycan. Residues 402–422 (IIILCSVVGSISVLGFTLLVP) traverse the membrane as a helical segment. Residues 423-797 (LILLKRSRKR…SRSSFGRPSP (375 aa)) are Cytoplasmic-facing. The Protein kinase domain maps to 461 to 742 (NGFSDKVGHG…TVVKMLEGVV (282 aa)). Residues 467-475 (VGHGGFGAV) and K490 contribute to the ATP site. Positions 550–566 (SPKLLSWETRFRIALGT) are caM-binding. D585 (proton acceptor) is an active-site residue. A disordered region spans residues 767 to 797 (GTSCSEGHGCSDLNTGLSSPGSRSSFGRPSP). Low complexity predominate over residues 784–797 (SSPGSRSSFGRPSP).

This sequence belongs to the protein kinase superfamily. Ser/Thr protein kinase family. Post-translationally, autophosphorylated. In terms of tissue distribution, expressed in the shoot apex and roots, specifically in lateral roots and at the root-hypocotyl transition zone.

The protein localises to the cell membrane. It carries out the reaction L-seryl-[protein] + ATP = O-phospho-L-seryl-[protein] + ADP + H(+). The enzyme catalyses L-threonyl-[protein] + ATP = O-phospho-L-threonyl-[protein] + ADP + H(+). Functionally, serine/threonine-protein kinase. In Arabidopsis thaliana (Mouse-ear cress), this protein is G-type lectin S-receptor-like serine/threonine-protein kinase SD2-2 (SD22).